Reading from the N-terminus, the 84-residue chain is RQC P-site tRNA stabilizing factor (84 aa).

The S4 RNA-binding domain occupies 1–64; it reads MRIDKFLQSV…IEEYTILQIP (64 aa).

Belongs to the RqcP family. In terms of assembly, associates with stalled 50S ribosomal subunits. Binds to RqcH, 23S rRNA and the P-site tRNA. Does not require RqcH for association with 50S subunits.

Its function is as follows. Key component of the ribosome quality control system (RQC), a ribosome-associated complex that mediates the extraction of incompletely synthesized nascent chains from stalled ribosomes and their subsequent degradation. RqcH recruits Ala-charged tRNA, and with RqcP directs the elongation of stalled nascent chains on 50S ribosomal subunits, leading to non-templated C-terminal alanine extensions (Ala tail). The Ala tail promotes nascent chain degradation. RqcP is associated with the translocation-like movement of the peptidyl-tRNA from the A-site into the P-site. This chain is RQC P-site tRNA stabilizing factor, found in Helicobacter pylori (strain ATCC 700392 / 26695) (Campylobacter pylori).